The primary structure comprises 197 residues: Cell division protein SepF (197 aa).

Disordered stretches follow at residues 38–72 (MPTPLPEESAPAPRRLPENPTVASNFAMNSNTTPT) and 164–197 (LSREETPATPAAPARPAAPAPAWSDEMTPMAQAQ). Over residues 58–72 (TVASNFAMNSNTTPT) the composition is skewed to polar residues. Residues 170–185 (PATPAAPARPAAPAPA) show a composition bias toward low complexity.

The protein belongs to the SepF family. Homodimer. Interacts with FtsZ.

Its subcellular location is the cytoplasm. In terms of biological role, cell division protein that is part of the divisome complex and is recruited early to the Z-ring. Probably stimulates Z-ring formation, perhaps through the cross-linking of FtsZ protofilaments. Its function overlaps with FtsA. The protein is Cell division protein SepF of Picosynechococcus sp. (strain ATCC 27264 / PCC 7002 / PR-6) (Agmenellum quadruplicatum).